The sequence spans 121 residues: MTEQKAKSSKTSSEEAKKQKELTEIKIKLKSYDSRLLDQSVKKIFEIVKETGSKFCGPIPLPTKKEVFTIIRSPHVDKASREQFERRTHKRLIIIKNLKNETIQKLKRFVIPSGVELRIYL.

Residues 1–20 are disordered; sequence MTEQKAKSSKTSSEEAKKQK.

This sequence belongs to the universal ribosomal protein uS10 family. As to quaternary structure, part of the 30S ribosomal subunit.

Its function is as follows. Involved in the binding of tRNA to the ribosomes. This is Small ribosomal subunit protein uS10 from Mycoplasmoides gallisepticum (strain R(low / passage 15 / clone 2)) (Mycoplasma gallisepticum).